The primary structure comprises 486 residues: NGFI-A-binding protein 1 (486 aa).

Residues 4 to 82 (ALPRTLGELQ…RDWVTNPGLF (79 aa)) are NCD1. Glycyl lysine isopeptide (Lys-Gly) (interchain with G-Cter in SUMO2) cross-links involve residues Lys-126, Lys-129, and Lys-143. The tract at residues 160-187 (WQGHHATESEHSLSPADLGSPASPKESS) is disordered. Phosphoserine is present on residues Ser-171 and Ser-182. Residue Lys-211 forms a Glycyl lysine isopeptide (Lys-Gly) (interchain with G-Cter in SUMO2) linkage. The segment at 220-309 (LLKNNKKLAK…ARQVSREVTY (90 aa)) is NCD2. Residues 306–337 (EVTYKYTYRTTRLKCGERDELSPKRIKIEDGF) are necessary for nuclear localization. Residue Ser-327 is modified to Phosphoserine. Residue Lys-332 forms a Glycyl lysine isopeptide (Lys-Gly) (interchain with G-Cter in SUMO1); alternate linkage. Lys-332 participates in a covalent cross-link: Glycyl lysine isopeptide (Lys-Gly) (interchain with G-Cter in SUMO2); alternate. Residues Lys-354, Lys-368, and Lys-372 each participate in a glycyl lysine isopeptide (Lys-Gly) (interchain with G-Cter in SUMO2) cross-link. The disordered stretch occupies residues 398–438 (RQSSGEQSPDGGLPSDSSDGQGERPLNLRIPSVQNRQPHHF). The span at 404-417 (QSPDGGLPSDSSDG) shows a compositional bias: low complexity. Ser-405 carries the post-translational modification Phosphoserine. Glycyl lysine isopeptide (Lys-Gly) (interchain with G-Cter in SUMO2) cross-links involve residues Lys-453, Lys-464, and Lys-476. Lys-479 is covalently cross-linked (Glycyl lysine isopeptide (Lys-Gly) (interchain with G-Cter in SUMO1); alternate). A Glycyl lysine isopeptide (Lys-Gly) (interchain with G-Cter in SUMO2); alternate cross-link involves residue Lys-479.

Belongs to the NAB family. In terms of assembly, homomultimers may associate with EGR1 bound to DNA. As to expression, widely expressed in adult. In day 16 embryo highest levels in forebrain, thymus, salivary gland and cartilage.

It localises to the nucleus. Acts as a transcriptional repressor for zinc finger transcription factors EGR1 and EGR2. This chain is NGFI-A-binding protein 1 (Nab1), found in Mus musculus (Mouse).